We begin with the raw amino-acid sequence, 176 residues long: RNA pyrophosphohydrolase (176 aa).

Positions 6–149 (GYRPNVGIVI…KRDVYRRVMK (144 aa)) constitute a Nudix hydrolase domain. The Nudix box motif lies at 38-59 (GGINPGESAEQAMYRELFEEVG).

The protein belongs to the Nudix hydrolase family. RppH subfamily. The cofactor is a divalent metal cation.

Its function is as follows. Accelerates the degradation of transcripts by removing pyrophosphate from the 5'-end of triphosphorylated RNA, leading to a more labile monophosphorylated state that can stimulate subsequent ribonuclease cleavage. This chain is RNA pyrophosphohydrolase, found in Salmonella paratyphi C (strain RKS4594).